Here is a 169-residue protein sequence, read N- to C-terminus: MSCILTALCKKGQANLNSLIKLQNKKVKNYYVKNNETAIDKMLCIAADIKGQVEQLELVNQYLGAPESEKLDFVYDCSDLDINEKDLKSLCLTKNIAYFTQKYNAPTVLKAQAAVYDSFIKHSELFINAICQMDEKQQVNNFCLDELVKLKLIAIKHLCALEYVIENSI.

As to quaternary structure, interacts with protein kinase PK1.

Its function is as follows. Plays a role in the stimulation of the viral kinase PK1 function in very late transcription and in expression of genes required for budded virus production. This Lepidoptera (butterflies and moths) protein is Protein kinase-interacting protein PIKP1 (AC24).